A 359-amino-acid polypeptide reads, in one-letter code: SAGA complex subunit Spt7 (359 aa).

In terms of assembly, component of the Spt-Ada-Gcn5 acetyltransferase (SAGA) complex consisting of wda/Taf5L, Saf6, Taf9, Taf10b, Taf12, Ada1, Spt3, Spt7, Spt20, Sf3b3, Sf3b5, Nipped-A/Tra1, a histone acetyltransferase (HAT) module made up of Gcn5, Ada2b (Isoform B), Ada3 and Sgf29, and a deubiquitinase (DUB) module made up of not/nonstop, Sgf11 and e(y)2 tethered to SAGA by Atxn7. Interacts with Ada2b; the interaction is direct.

It localises to the nucleus. In terms of biological role, component of the transcription regulatory complex SAGA, a multiprotein complex that activates transcription by remodeling chromatin and mediating histone acetylation and deubiquitination. The SAGA complex predominantly acetylates histone H3. The sequence is that of SAGA complex subunit Spt7 from Drosophila melanogaster (Fruit fly).